The sequence spans 448 residues: Argininosuccinate synthase (448 aa).

Residues 17-25 and A43 contribute to the ATP site; that span reads AFSGGLDTS. L-citrulline is bound at residue Y99. ATP is bound by residues G129 and T131. L-aspartate-binding residues include T131, N135, and D136. N135 contacts L-citrulline. D136 contributes to the ATP binding site. L-citrulline-binding residues include R139 and S192. D194 provides a ligand contact to ATP. L-citrulline contacts are provided by T201, E203, and E280.

This sequence belongs to the argininosuccinate synthase family. Type 2 subfamily. Homotetramer.

The protein localises to the cytoplasm. The enzyme catalyses L-citrulline + L-aspartate + ATP = 2-(N(omega)-L-arginino)succinate + AMP + diphosphate + H(+). The protein operates within amino-acid biosynthesis; L-arginine biosynthesis; L-arginine from L-ornithine and carbamoyl phosphate: step 2/3. This is Argininosuccinate synthase from Pectobacterium atrosepticum (strain SCRI 1043 / ATCC BAA-672) (Erwinia carotovora subsp. atroseptica).